The sequence spans 431 residues: Urokinase-type plasminogen activator (431 aa).

Positions 1-20 (MRALLARLLLCVLVVSDSKG) are cleaved as a signal peptide. One can recognise an EGF-like domain in the interval 27–63 (VPSNCDCLNGGTCVSNKYFSNIHWCNCPKKFGGQHCE). 6 disulfide bridges follow: C31/C39, C33/C51, C53/C62, C70/C151, C91/C133, and C122/C146. The segment at 34–57 (LNGGTCVSNKYFSNIHWCNCPKKF) is binds urokinase plasminogen activator surface receptor. Residues 69–151 (TCYEGNGHFY…LVQECMVHDC (83 aa)) enclose the Kringle domain. Residues 152–178 (ADGKKPSSPPEELKFQCGQKTLRPRFK) form a connecting peptide region. S158 carries the post-translational modification Phosphoserine. Disulfide bonds link C168–C299, C209–C225, C217–C288, C313–C382, C345–C361, and C372–C400. The region spanning 179-424 (IVGGEFTTIE…FLPWIRSHTK (246 aa)) is the Peptidase S1 domain. Residues H224 and D275 each act as charge relay system in the active site. A glycan (N-linked (GlcNAc...) asparagine) is linked at N322. The residue at position 323 (S323) is a Phosphoserine. Catalysis depends on S376, which acts as the Charge relay system.

The protein belongs to the peptidase S1 family. As to quaternary structure, found in high and low molecular mass forms. Each consists of two chains, A and B. The high molecular mass form contains a long chain A which is cleaved to yield a short chain A. Forms heterodimer with SERPINA5. Binds LRP1B; binding is followed by internalization and degradation. Interacts with MRC2. Interacts with PLAUR. In complex with SERPINE1, interacts with PLAUR/uPAR. Interacts with SORL1 and LRP1, either alone or in complex with SERPINE1; these interactions are abolished in the presence of LRPAP1/RAP. The ternary complex composed of PLAUR-PLAU-PAI1 also interacts with SORLA. Post-translationally, phosphorylation of Ser-158 and Ser-323 abolishes proadhesive ability but does not interfere with receptor binding. Produced as an inactive single-chain protein (pro-uPA or sc-uPA), is processed into the active disulfide-linked two-chain form of PLAU/uPA by a proteolytic event mediated, at least, by TMPRSS4.

The protein resides in the secreted. It carries out the reaction Specific cleavage of Arg-|-Val bond in plasminogen to form plasmin.. Inhibited by SERPINA5. Inhibited by SERPINE1. Specifically cleaves the zymogen plasminogen to form the active enzyme plasmin. This chain is Urokinase-type plasminogen activator (PLAU), found in Pongo abelii (Sumatran orangutan).